Consider the following 475-residue polypeptide: Histidine--tRNA ligase (475 aa).

Belongs to the class-II aminoacyl-tRNA synthetase family. Homodimer.

The protein resides in the cytoplasm. The enzyme catalyses tRNA(His) + L-histidine + ATP = L-histidyl-tRNA(His) + AMP + diphosphate + H(+). This is Histidine--tRNA ligase from Flavobacterium johnsoniae (strain ATCC 17061 / DSM 2064 / JCM 8514 / BCRC 14874 / CCUG 350202 / NBRC 14942 / NCIMB 11054 / UW101) (Cytophaga johnsonae).